The chain runs to 576 residues: MNVKTEPDRSRDVSQPLDKLGPDETLKANSDYLRGTIKQSLADEITAAVTANDAKLMKFFGIYQQDDRDIRDERRRQKLEAAFSFMVRVRLPGGVCSPSQWLKLDALGRAYGGDTLRLTTRQTFQLHRIMKHNMRAVIQGLRDVLLDTRAACGDDTRGVMCTVNPDLSKLHAEVYALAKQASDHAVHRTGAYQEIWYEAERQDTDGPEEPFYGRTYMPRKFKIGFAIPPSNDIDVYGQDLGFIAIARRGKLKGFNVAIGGGLGRTDQSPKTYPRLATVIGYIDADKLFPTIDAVMSVQRDYGDRLDRLHARFKYTIDEKGLDWIKAEAERRLGFALEPAQPYTFTSNGDPLGWVKGEDGREHCTLFIQNGRVINTPDHPMMDGLRAIAQVHKGMFRITPNQNLIISDIAPEDRPAIAALMKQYGLDQFETRSGLRLNSMACVALPTCGLAMAESERYLPDLVTKIEAILNVHGLKDDPITIRMTGCPNGCSRPYIAEIGLTGRAPGKYNLYLGGGFHGERLNKMYLENVGEGAILEALDKTLGHYARDRKPGEHFGDFAIRAGYVVEVKEGRFFND.

The segment covering Met-1–Asp-12 has biased composition (basic and acidic residues). Positions Met-1–Thr-25 are disordered. Cys-441, Cys-447, Cys-486, and Cys-490 together coordinate [4Fe-4S] cluster. Cys-490 contributes to the siroheme binding site.

The protein belongs to the nitrite and sulfite reductase 4Fe-4S domain family. As to quaternary structure, alpha(8)-beta(8). The alpha component is a flavoprotein, the beta component is a hemoprotein. Requires siroheme as cofactor. [4Fe-4S] cluster serves as cofactor.

It carries out the reaction hydrogen sulfide + 3 NADP(+) + 3 H2O = sulfite + 3 NADPH + 4 H(+). It participates in sulfur metabolism; hydrogen sulfide biosynthesis; hydrogen sulfide from sulfite (NADPH route): step 1/1. Component of the sulfite reductase complex that catalyzes the 6-electron reduction of sulfite to sulfide. This is one of several activities required for the biosynthesis of L-cysteine from sulfate. This Nitrobacter hamburgensis (strain DSM 10229 / NCIMB 13809 / X14) protein is Sulfite reductase [NADPH] hemoprotein beta-component.